Consider the following 373-residue polypeptide: Centrosomal protein of 41 kDa (373 aa).

The interval 89-137 (QRLEDNDSAASDPDAETTARTNGKGNPGEQSPSPEQFINNAGAGDSSRS) is disordered. Phosphoserine is present on residues S96 and S99. Residues 106–127 (TARTNGKGNPGEQSPSPEQFIN) show a composition bias toward polar residues. T109 carries the post-translational modification Phosphothreonine. S121 is subject to Phosphoserine. Residues 169-266 (PDCPFLLLDV…LAQKFPEGLI (98 aa)) enclose the Rhodanese domain. The tract at residues 275–373 (QQALPPGSAR…SGHLQGKPWK (99 aa)) is disordered. A compositionally biased stretch (basic and acidic residues) spans 298 to 312 (NKWRFTPEDLKKIEY). At R343 the chain carries Omega-N-methylarginine. Positions 355 to 366 (SHSNPRSLSSGH) are enriched in polar residues.

It belongs to the CEP41 family. In terms of assembly, found in a complex with TTLL6. In terms of tissue distribution, expressed in testis and fetal tissues.

It localises to the cytoplasm. The protein resides in the cytoskeleton. The protein localises to the microtubule organizing center. It is found in the centrosome. Its subcellular location is the cell projection. It localises to the cilium. The protein resides in the cilium basal body. Required during ciliogenesis for tubulin glutamylation in cilium. Probably acts by participating in the transport of TTLL6, a tubulin polyglutamylase, between the basal body and the cilium. The chain is Centrosomal protein of 41 kDa (CEP41) from Homo sapiens (Human).